Consider the following 201-residue polypeptide: Small ribosomal subunit protein uS4 (201 aa).

The S4 RNA-binding domain maps to 93 to 153 (ARLDNVVYRM…EKSKSLEAID (61 aa)).

The protein belongs to the universal ribosomal protein uS4 family. As to quaternary structure, part of the 30S ribosomal subunit. Contacts protein S5. The interaction surface between S4 and S5 is involved in control of translational fidelity.

Functionally, one of the primary rRNA binding proteins, it binds directly to 16S rRNA where it nucleates assembly of the body of the 30S subunit. With S5 and S12 plays an important role in translational accuracy. The polypeptide is Small ribosomal subunit protein uS4 (Flavobacterium psychrophilum (strain ATCC 49511 / DSM 21280 / CIP 103535 / JIP02/86)).